The sequence spans 354 residues: Abasic site processing protein HMCES (354 aa).

The active-site Nucleophile is C2. C2 carries the thiazolidine linkage to a ring-opened DNA abasic site modification. The active site involves E127. Glycyl lysine isopeptide (Lys-Gly) (interchain with G-Cter in SUMO2) cross-links involve residues K148 and K151. At S160 the chain carries Phosphoserine. K276 is covalently cross-linked (Glycyl lysine isopeptide (Lys-Gly) (interchain with G-Cter in SUMO2)). Residues 292-354 (ATKSPKKEDS…EPVAKRPYSQ (63 aa)) are disordered. At S295 the chain carries Phosphoserine. Over residues 296–309 (PKKEDSKTPQKEES) the composition is skewed to basic and acidic residues. A Glycyl lysine isopeptide (Lys-Gly) (interchain with G-Cter in SUMO2) cross-link involves residue K306. At S322 the chain carries Phosphoserine. The PIP-box signature appears at 332-338 (GLLEQWL). The span at 337-348 (WLKREKEEEPVA) shows a compositional bias: basic and acidic residues. Residues K339 and K342 each participate in a glycyl lysine isopeptide (Lys-Gly) (interchain with G-Cter in SUMO2) cross-link.

This sequence belongs to the SOS response-associated peptidase family. Interacts (via PIP-box motif) with PCNA. Post-translationally, ubiquitinated; the covalent HMCES DNA-protein cross-link is ubiquitinated, leading to its degradation by the proteasome.

It localises to the chromosome. Its activity is regulated as follows. Formation and reversal of DNA-protein cross-link depends on DNA context. Catalyzes formation of the thiazolidine linkage in presence of abasic sites in single-stranded DNA. Mediates the reversal of the thiazolidine cross-link in presence of double stranded DNA. In terms of biological role, sensor of abasic sites in single-stranded DNA (ssDNA) required to preserve genome integrity by promoting error-free repair of abasic sites. Acts as an enzyme that recognizes and binds abasic sites in ssDNA at replication forks and chemically modifies the lesion by forming a covalent cross-link with DNA: forms a stable thiazolidine linkage between a ring-opened abasic site and the alpha-amino and sulfhydryl substituents of its N-terminal catalytic cysteine residue. Promotes error-free repair by protecting abasic sites from translesion synthesis (TLS) polymerases and endonucleases that are error-prone and would generate mutations and double-strand breaks. The HMCES DNA-protein cross-link is then either reversed or degraded. HMCES is able to catalyze the reversal of its thiazolidine cross-link and cycle between a cross-link and a non-cross-linked state depending on DNA context: mediates self-reversal of the thiazolidine cross-link in double stranded DNA, allowing APEX1 to initiate downstream repair of abasic sites. The HMCES DNA-protein cross-link can also be degraded by the SPRTN metalloprotease following unfolding by the BRIP1/FANCJ helicase. Has preference for ssDNA, but can also accommodate double-stranded DNA with 3' or 5' overhang (dsDNA), and dsDNA-ssDNA 3' junction. Plays a protective role during somatic hypermutation of immunoglobulin genes in B-cells: acts via its ability to form covalent cross-links with abasic sites, thereby limiting the accumulation of deletions in somatic hypermutation target regions. Also involved in class switch recombination (CSR) in B-cells independently of the formation of a DNA-protein cross-link: acts by binding and protecting ssDNA overhangs to promote DNA double-strand break repair through the microhomology-mediated alternative-end-joining (Alt-EJ) pathway. Acts as a protease: mediates autocatalytic processing of its N-terminal methionine in order to expose the catalytic cysteine. The polypeptide is Abasic site processing protein HMCES (Pongo abelii (Sumatran orangutan)).